We begin with the raw amino-acid sequence, 271 residues long: 3-methyl-2-oxobutanoate hydroxymethyltransferase (271 aa).

Residues aspartate 49 and aspartate 88 each coordinate Mg(2+). Residues 49 to 50, aspartate 88, and lysine 118 contribute to the 3-methyl-2-oxobutanoate site; that span reads DS. Position 120 (glutamate 120) interacts with Mg(2+). Glutamate 187 acts as the Proton acceptor in catalysis.

It belongs to the PanB family. Homodecamer; pentamer of dimers. The cofactor is Mg(2+).

The protein resides in the cytoplasm. It catalyses the reaction 3-methyl-2-oxobutanoate + (6R)-5,10-methylene-5,6,7,8-tetrahydrofolate + H2O = 2-dehydropantoate + (6S)-5,6,7,8-tetrahydrofolate. The protein operates within cofactor biosynthesis; (R)-pantothenate biosynthesis; (R)-pantoate from 3-methyl-2-oxobutanoate: step 1/2. Its function is as follows. Catalyzes the reversible reaction in which hydroxymethyl group from 5,10-methylenetetrahydrofolate is transferred onto alpha-ketoisovalerate to form ketopantoate. The chain is 3-methyl-2-oxobutanoate hydroxymethyltransferase from Bartonella tribocorum (strain CIP 105476 / IBS 506).